The sequence spans 560 residues: Eukaryotic translation initiation factor 3 subunit D-1 (560 aa).

The interval 98–166 (VQKPPHQRGR…RGPPPKMRES (69 aa)) is disordered. The segment covering 100–121 (KPPHQRGRFRNMRNSRSGRGRN) has biased composition (basic residues). A Phosphothreonine modification is found at Thr128. The span at 147-156 (GRGMGKKFGH) shows a compositional bias: basic residues. Residues 291–305 (EFDLLTVNESSVEPP) are RNA gate.

Belongs to the eIF-3 subunit D family. Component of the eukaryotic translation initiation factor 3 (eIF-3) complex. The eIF-3 complex interacts with pix.

It localises to the cytoplasm. Functionally, mRNA cap-binding component of the eukaryotic translation initiation factor 3 (eIF-3) complex, which is involved in protein synthesis of a specialized repertoire of mRNAs and, together with other initiation factors, stimulates binding of mRNA and methionyl-tRNAi to the 40S ribosome. The eIF-3 complex specifically targets and initiates translation of a subset of mRNAs involved in cell proliferation. In the eIF-3 complex, eif3d specifically recognizes and binds the 7-methylguanosine cap of a subset of mRNAs. The protein is Eukaryotic translation initiation factor 3 subunit D-1 of Drosophila yakuba (Fruit fly).